Here is a 506-residue protein sequence, read N- to C-terminus: Aluminum-activated malate transporter 7 (506 aa).

A run of 6 helical transmembrane segments spans residues 28–48 (VGLV…YDSF), 52–72 (AMWA…ATLG), 78–98 (VAAT…ASMS), 104–124 (PILL…VRFF), 130–150 (RYDY…VSGF), and 166–186 (VIIG…VWAG). The interval 461–485 (DDGNNDDTSKNDNGSKEVSIHEKHE) is disordered. Over residues 467 to 485 (DTSKNDNGSKEVSIHEKHE) the composition is skewed to basic and acidic residues.

The protein belongs to the aromatic acid exporter (TC 2.A.85) family.

The protein localises to the membrane. Malate transporter. The chain is Aluminum-activated malate transporter 7 (ALMT7) from Arabidopsis thaliana (Mouse-ear cress).